Reading from the N-terminus, the 256-residue chain is MSTLKLTLLQQPLVWLDAQANLRHFDMLLESIQQRDVIVLPEMFTTGFAMNAAENALPETEVIDWLRHWSVRTDALIGGSVALNTPDGAVNRFLLVQPDGTILRYDKRHLFRMAGEHHHYLAGKERKVVEWRGWRILPQVCYDLRFPVWSRNQQDYDLALYVANWPAARAKHWQTLLAARAIENQAYVAGCNRVGDDDNGHHYQGNSVILDALGEIQAQAEPGQAAQLDAELSLETLQAYRERFPAFHDTDKFLLL.

One can recognise a CN hydrolase domain in the interval 4–234 (LKLTLLQQPL…AAQLDAELSL (231 aa)). E42 serves as the catalytic Proton acceptor. Residue K107 is part of the active site. C141 (nucleophile) is an active-site residue.

This sequence belongs to the carbon-nitrogen hydrolase superfamily. NIT1/NIT2 family.

It catalyses the reaction a monoamide of a dicarboxylate + H2O = a dicarboxylate + NH4(+). Functionally, hydrolyzes alpha-ketoglutaramate (a-KGM) to alpha-ketoglutarate (alpha-KG) and ammonia (specific activity 21 umol/min/mg), has very weak activity on L-glutamine, and no activity on deaminated glutathione (dGSH) or glutathione. May function as a metabolite repair enzyme. This Yersinia enterocolitica protein is Omega-amidase YafV.